Consider the following 172-residue polypeptide: MLKIVTRAGHTARISNIAAHLLRTSPSLLTRTTTTTRFLPFSTSSFLNHGHLKKPKPGEELKITFILKDGSQKTYEVCEGETILDIAQGHNLDMEGACGGSCACSTCHVIVDPDYYDALPEPEDDENDMLDLAYGLTETSRLGCQIKMSKDIDGIRVALPQMTRNVNNNDFS.

Residues 1-16 (MLKIVTRAGHTARISN) constitute a mitochondrion transit peptide. Residues 61–163 (LKITFILKDG…GIRVALPQMT (103 aa)) enclose the 2Fe-2S ferredoxin-type domain. Residues Cys98, Cys104, Cys107, and Cys144 each contribute to the [2Fe-2S] cluster site.

This sequence belongs to the adrenodoxin/putidaredoxin family. Interacts in its reduced state with the apo form of ISU1. The cofactor is [2Fe-2S] cluster.

Its subcellular location is the mitochondrion matrix. In terms of biological role, iron-sulfur protein that transfers electrons in a wide variety of metabolic reactions. Involved in heme A biosynthesis and in iron-sulfur cluster assembly. Transfers electrons from adrenodoxin reductase ARH1 to heme A synthase COX15, a heme protein that catalyzes the conversion of heme O to heme A. Required for the de novo synthesis of Fe-S clusters on iron sulfur cluster assembly protein ISU1. Interact in its reduced state with ISU1 to productively deliver electrons for Fe-S cluster synthesis. Essential for coenzyme Q biosynthesis. May transfer the electrons required for the hydroxylation reaction performed by COQ6. The protein is Adrenodoxin homolog, mitochondrial of Saccharomyces cerevisiae (strain ATCC 204508 / S288c) (Baker's yeast).